Reading from the N-terminus, the 362-residue chain is Epoxide hydrolase 4 (362 aa).

Residues S17 to L37 traverse the membrane as a helical; Signal-anchor for type II membrane protein segment. Positions P94–L211 constitute an AB hydrolase-1 domain. D169 acts as the Nucleophile in catalysis. Residue Y281 is the Proton donor of the active site. H336 serves as the catalytic Proton acceptor.

It belongs to the AB hydrolase superfamily. Epoxide hydrolase family.

It is found in the membrane. The sequence is that of Epoxide hydrolase 4 (EPHX4) from Homo sapiens (Human).